The primary structure comprises 407 residues: Proteasome-activating nucleotidase (407 aa).

Residues 22–67 (KEKAYLAELESKVLRLELKNKDITRENVQIKKENEILKRELDKLRI) adopt a coiled-coil conformation. ATP contacts are provided by residues 192–197 (GTGKTL) and H331. Residues 405-407 (MYG) are docks into pockets in the proteasome alpha-ring to cause gate opening.

Belongs to the AAA ATPase family. As to quaternary structure, homohexamer. The hexameric complex has a two-ring architecture resembling a top hat that caps the 20S proteasome core at one or both ends. Upon ATP-binding, the C-terminus of PAN interacts with the alpha-rings of the proteasome core by binding to the intersubunit pockets.

The protein localises to the cytoplasm. ATPase which is responsible for recognizing, binding, unfolding and translocation of substrate proteins into the archaeal 20S proteasome core particle. Is essential for opening the gate of the 20S proteasome via an interaction with its C-terminus, thereby allowing substrate entry and access to the site of proteolysis. Thus, the C-termini of the proteasomal ATPase function like a 'key in a lock' to induce gate opening and therefore regulate proteolysis. Unfolding activity requires energy from ATP hydrolysis, whereas ATP binding alone promotes ATPase-20S proteasome association which triggers gate opening, and supports translocation of unfolded substrates. This Methanococcus vannielii (strain ATCC 35089 / DSM 1224 / JCM 13029 / OCM 148 / SB) protein is Proteasome-activating nucleotidase.